Reading from the N-terminus, the 60-residue chain is Potassium channel toxin-like Tx677 (60 aa).

Positions 1–22 (MKISALVMITLLICSMMILCQG) are cleaved as a signal peptide. Intrachain disulfides connect C30/C51, C36/C56, and C40/C58.

It belongs to the short scorpion toxin superfamily. Potassium channel inhibitor family. As to expression, expressed by the venom gland.

It is found in the secreted. Weakly inhibits Kv11.1/KCNH2/ERG1, Kv1.2/KCNA2 and Kv1.3/KCNA3 voltage-gated potassium channels. This chain is Potassium channel toxin-like Tx677, found in Buthus israelis (Israeli scorpion).